We begin with the raw amino-acid sequence, 224 residues long: Probable C-&gt;U-editing enzyme APOBEC-2 (224 aa).

The interval 1-25 is disordered; that stretch reads MAQKEEAAAAAEPASQNGEEVENLE. Zn(2+) contacts are provided by Glu60 and His98. Positions 64–169 constitute a CMP/dCMP-type deaminase domain; that stretch reads GRNKTFLCYV…PEIQAALRKL (106 aa). Glu100 serves as the catalytic Proton donor. The Zn(2+) site is built by Cys128 and Cys131.

The protein belongs to the cytidine and deoxycytidylate deaminase family. In terms of assembly, homotetramer. The cofactor is Zn(2+).

The catalysed reaction is cytidine(6666) in apoB mRNA + H2O + H(+) = uridine(6666) in apoB mRNA + NH4(+). In terms of biological role, probable C to U editing enzyme whose physiological substrate is not yet known. Does not display detectable apoB mRNA editing. Has a low intrinsic cytidine deaminase activity. May play a role in the epigenetic regulation of gene expression through the process of active DNA demethylation. The chain is Probable C-&gt;U-editing enzyme APOBEC-2 (APOBEC2) from Bos taurus (Bovine).